The primary structure comprises 366 residues: Mitogen-activated protein kinase CPK1 (366 aa).

A Protein kinase domain is found at 17 to 302 (KLEEIVGEGA…SPSKRITVEE (286 aa)). ATP is bound by residues 22 to 30 (VGEGAYGLV) and K45. Residue D140 is the Proton acceptor of the active site. T181 carries the phosphothreonine modification. The TXY motif lies at 181–183 (TEY). The residue at position 183 (Y183) is a Phosphotyrosine.

This sequence belongs to the protein kinase superfamily. CMGC Ser/Thr protein kinase family. MAP kinase subfamily. The cofactor is Mg(2+). In terms of processing, dually phosphorylated on Thr-181 and Tyr-183, which activates the enzyme.

It carries out the reaction L-seryl-[protein] + ATP = O-phospho-L-seryl-[protein] + ADP + H(+). The enzyme catalyses L-threonyl-[protein] + ATP = O-phospho-L-threonyl-[protein] + ADP + H(+). Activated by tyrosine and threonine phosphorylation. Its function is as follows. Responds to activation by environmental stress by phosphorylating downstream targets. The protein is Mitogen-activated protein kinase CPK1 (CPK1) of Cryptococcus neoformans var. neoformans serotype D (strain B-3501A) (Filobasidiella neoformans).